The chain runs to 455 residues: Golgi pH regulator A (455 aa).

5 consecutive transmembrane segments (helical) span residues 5 to 25 (IDSSIMITSQILFFGFGWLFF), 46 to 66 (VTFAFSCTMFELIIFEILGVL), 79 to 99 (LCVILLILVFMVPFYIGYFIV), 114 to 134 (CLLWLTFMYFFWKLGDPFPIL), and 150 to 170 (VGVIGVTLMALLSGFGAVNCP). Residues asparagine 180 and asparagine 243 are each glycosylated (N-linked (GlcNAc...) asparagine). 4 helical membrane passes run 290-310 (GYFFSIYCVWKIFMATINIVF), 343-363 (ISFILVGIIIVTSIRGLLITL), 378-398 (VIVLLLAQIMGMYFVSSVLLI), and 425-445 (WFDVIFLVSALSSILFLYLAH).

It belongs to the Golgi pH regulator (TC 1.A.38) family. In terms of assembly, homotrimer. Interacts with RABL3; the interaction stabilizes GPR89A. Ubiquitous.

It localises to the golgi apparatus membrane. The enzyme catalyses iodide(out) = iodide(in). It carries out the reaction chloride(in) = chloride(out). It catalyses the reaction bromide(in) = bromide(out). The catalysed reaction is fluoride(in) = fluoride(out). In terms of biological role, voltage-gated channel that enables the transfer of monoatomic anions such as iodide, chloride, bromide and fluoride which may function in counter-ion conductance and participates in Golgi acidification. Plays a role in lymphocyte development, probably by acting as a RABL3 effector in hematopoietic cells. The sequence is that of Golgi pH regulator A from Homo sapiens (Human).